The following is a 255-amino-acid chain: Hydroxyacylglutathione hydrolase (255 aa).

Positions 56, 58, 60, 61, 114, 133, and 171 each coordinate Zn(2+).

It belongs to the metallo-beta-lactamase superfamily. Glyoxalase II family. Monomer. Zn(2+) serves as cofactor.

The enzyme catalyses an S-(2-hydroxyacyl)glutathione + H2O = a 2-hydroxy carboxylate + glutathione + H(+). It functions in the pathway secondary metabolite metabolism; methylglyoxal degradation; (R)-lactate from methylglyoxal: step 2/2. Functionally, thiolesterase that catalyzes the hydrolysis of S-D-lactoyl-glutathione to form glutathione and D-lactic acid. This Fuscovulum blasticum (Rhodobacter blasticus) protein is Hydroxyacylglutathione hydrolase.